A 260-amino-acid chain; its full sequence is Adenosylcobinamide-GDP ribazoletransferase (260 aa).

6 helical membrane-spanning segments follow: residues 40-60, 64-84, 117-137, 192-212, 214-234, and 240-260; these read AFPLAGAVLGLLAGAVLFMAY, LPPLACAMLAIGALAAMTGAL, FAALTLIVFVGLKAALLMTII, GIGLAFLVFTLIPAGGFLSLI, ALVLATGLLFGFARLCIAKIG, and TLGAAQQIGSVAVLAGLVMAL.

This sequence belongs to the CobS family. Mg(2+) serves as cofactor.

It localises to the cell inner membrane. The enzyme catalyses alpha-ribazole + adenosylcob(III)inamide-GDP = adenosylcob(III)alamin + GMP + H(+). It carries out the reaction alpha-ribazole 5'-phosphate + adenosylcob(III)inamide-GDP = adenosylcob(III)alamin 5'-phosphate + GMP + H(+). Its pathway is cofactor biosynthesis; adenosylcobalamin biosynthesis; adenosylcobalamin from cob(II)yrinate a,c-diamide: step 7/7. Joins adenosylcobinamide-GDP and alpha-ribazole to generate adenosylcobalamin (Ado-cobalamin). Also synthesizes adenosylcobalamin 5'-phosphate from adenosylcobinamide-GDP and alpha-ribazole 5'-phosphate. This Brucella anthropi (strain ATCC 49188 / DSM 6882 / CCUG 24695 / JCM 21032 / LMG 3331 / NBRC 15819 / NCTC 12168 / Alc 37) (Ochrobactrum anthropi) protein is Adenosylcobinamide-GDP ribazoletransferase.